We begin with the raw amino-acid sequence, 77 residues long: Acyl carrier protein (77 aa).

In terms of domain architecture, Carrier spans 1–76; sequence MENFDKVKDI…DAVNFINNLE (76 aa). An O-(pantetheine 4'-phosphoryl)serine modification is found at serine 36.

It belongs to the acyl carrier protein (ACP) family. In terms of processing, 4'-phosphopantetheine is transferred from CoA to a specific serine of apo-ACP by AcpS. This modification is essential for activity because fatty acids are bound in thioester linkage to the sulfhydryl of the prosthetic group.

The protein localises to the cytoplasm. The protein operates within lipid metabolism; fatty acid biosynthesis. Carrier of the growing fatty acid chain in fatty acid biosynthesis. The polypeptide is Acyl carrier protein (Staphylococcus carnosus (strain TM300)).